We begin with the raw amino-acid sequence, 1087 residues long: DNA polymerase II large subunit (1087 aa).

It belongs to the archaeal DNA polymerase II family. In terms of assembly, heterodimer of a large subunit and a small subunit.

The enzyme catalyses DNA(n) + a 2'-deoxyribonucleoside 5'-triphosphate = DNA(n+1) + diphosphate. It carries out the reaction Exonucleolytic cleavage in the 3'- to 5'-direction to yield nucleoside 5'-phosphates.. Its function is as follows. Possesses two activities: a DNA synthesis (polymerase) and an exonucleolytic activity that degrades single-stranded DNA in the 3'- to 5'-direction. Has a template-primer preference which is characteristic of a replicative DNA polymerase. The chain is DNA polymerase II large subunit (polC) from Thermoplasma acidophilum (strain ATCC 25905 / DSM 1728 / JCM 9062 / NBRC 15155 / AMRC-C165).